Here is a 263-residue protein sequence, read N- to C-terminus: Methylesterase 1 (263 aa).

Serine 85 (acyl-ester intermediate) is an active-site residue. Residues aspartate 213 and histidine 241 each act as charge relay system in the active site.

The protein belongs to the AB hydrolase superfamily. Methylesterase family.

The catalysed reaction is methyl (indol-3-yl)acetate + H2O = (indol-3-yl)acetate + methanol + H(+). The enzyme catalyses methyl (-)-jasmonate + H2O = jasmonate + methanol + H(+). It carries out the reaction methyl salicylate + H2O = salicylate + methanol + H(+). It functions in the pathway plant hormone biosynthesis. It participates in lipid metabolism; oxylipin biosynthesis. Its activity is regulated as follows. Esterase activity is down-regulated by salicylic acid (SA). Its function is as follows. Methylesterase shown to have carboxylesterase activity, methyl indole-3-acetic acid (MeIAA) esterase activity, methyl salicylate (MeSA) esterase activity and methyl jasmonate (MeJA) esterase activity in vitro. Required to convert methyl salicylate (MeSA) to salicylic acid (SA) as part of the signal transduction pathways that activate systemic acquired resistance in systemic tissue. MeSA is believed to be an inactive form that needs to be demethylated to exert a biological effect. In Arabidopsis thaliana (Mouse-ear cress), this protein is Methylesterase 1.